The sequence spans 157 residues: Peptide methionine sulfoxide reductase MsrA (157 aa).

The active site involves cysteine 10.

The protein belongs to the MsrA Met sulfoxide reductase family.

The catalysed reaction is L-methionyl-[protein] + [thioredoxin]-disulfide + H2O = L-methionyl-(S)-S-oxide-[protein] + [thioredoxin]-dithiol. It catalyses the reaction [thioredoxin]-disulfide + L-methionine + H2O = L-methionine (S)-S-oxide + [thioredoxin]-dithiol. In terms of biological role, has an important function as a repair enzyme for proteins that have been inactivated by oxidation. Catalyzes the reversible oxidation-reduction of methionine sulfoxide in proteins to methionine. In Clostridium botulinum (strain Hall / ATCC 3502 / NCTC 13319 / Type A), this protein is Peptide methionine sulfoxide reductase MsrA.